Consider the following 263-residue polypeptide: MAPK-interacting and spindle-stabilizing protein (263 aa).

The segment at 13–238 (GSPAPFLPSG…LGKQQGHNTT (226 aa)) is disordered. 2 stretches are compositionally biased toward pro residues: residues 14–34 (SPAPFLPSGPSCPQPSGPYPG) and 140–155 (GLQPSPNNPYPLPPGP). The span at 156 to 165 (SAASPGPGSL) shows a compositional bias: low complexity. The span at 176 to 189 (PSDSSNPESTLEST) shows a compositional bias: polar residues. The segment covering 202–213 (IKRRRSKKKSKR) has biased composition (basic residues).

The protein belongs to the MISS family. Interacts with MAPK1. Phosphorylated in vitro by MAPK1.

Its subcellular location is the cytoplasm. It is found in the cytoskeleton. The protein localises to the spindle. Its function is as follows. Involved in the maintenance of the spindle integrity during the cytostatic factor (CSF) arrest of oocytes. This is MAPK-interacting and spindle-stabilizing protein (Mapk1ip1) from Mus musculus (Mouse).